Here is a 203-residue protein sequence, read N- to C-terminus: Urease accessory protein UreG (203 aa).

14–21 (GPVGSGKT) serves as a coordination point for GTP.

Belongs to the SIMIBI class G3E GTPase family. UreG subfamily. Homodimer. UreD, UreF and UreG form a complex that acts as a GTP-hydrolysis-dependent molecular chaperone, activating the urease apoprotein by helping to assemble the nickel containing metallocenter of UreC. The UreE protein probably delivers the nickel.

Its subcellular location is the cytoplasm. Its function is as follows. Facilitates the functional incorporation of the urease nickel metallocenter. This process requires GTP hydrolysis, probably effectuated by UreG. The protein is Urease accessory protein UreG of Rhizobium leguminosarum bv. trifolii (strain WSM2304).